The chain runs to 644 residues: Threonine--tRNA ligase (644 aa).

A TGS domain is found at 1–62 (MSFSITLPDG…DSDSEVAIIT (62 aa)). The interval 240–538 (DHRTIGRDLD…LTEIYKGAFP (299 aa)) is catalytic. Residues cysteine 334, histidine 385, and histidine 515 each coordinate Zn(2+).

This sequence belongs to the class-II aminoacyl-tRNA synthetase family. As to quaternary structure, homodimer. Zn(2+) is required as a cofactor.

Its subcellular location is the cytoplasm. The catalysed reaction is tRNA(Thr) + L-threonine + ATP = L-threonyl-tRNA(Thr) + AMP + diphosphate + H(+). Functionally, catalyzes the attachment of threonine to tRNA(Thr) in a two-step reaction: L-threonine is first activated by ATP to form Thr-AMP and then transferred to the acceptor end of tRNA(Thr). Also edits incorrectly charged L-seryl-tRNA(Thr). This Lactobacillus helveticus (strain DPC 4571) protein is Threonine--tRNA ligase.